The primary structure comprises 231 residues: NADH-ubiquinone oxidoreductase chain 4 (231 aa).

7 helical membrane passes run 1–21 (PIAGSMVLAAVLLKLGGYGII), 34–54 (MFLPFIVLALWGAILANLTCL), 63–85 (IAYSSISHMGLVVAAIIIQTPWG), 89–111 (AMALMIAHGFTSSALFCLANTTY), 128–148 (ILPMTTTWWLLANLMNIATPP), 169–189 (TIILLGLSMLITASYSLHMFL), and 211–231 (LLMALHLVPLMMISMKPELII).

The protein belongs to the complex I subunit 4 family.

It is found in the mitochondrion membrane. It carries out the reaction a ubiquinone + NADH + 5 H(+)(in) = a ubiquinol + NAD(+) + 4 H(+)(out). Core subunit of the mitochondrial membrane respiratory chain NADH dehydrogenase (Complex I) that is believed to belong to the minimal assembly required for catalysis. Complex I functions in the transfer of electrons from NADH to the respiratory chain. The immediate electron acceptor for the enzyme is believed to be ubiquinone. The protein is NADH-ubiquinone oxidoreductase chain 4 (MT-ND4) of Cerrophidion godmani (Porthidium godmani).